The sequence spans 309 residues: Porphobilinogen deaminase (309 aa).

Cysteine 240 bears the S-(dipyrrolylmethanemethyl)cysteine mark.

It belongs to the HMBS family. Monomer. Dipyrromethane is required as a cofactor.

It catalyses the reaction 4 porphobilinogen + H2O = hydroxymethylbilane + 4 NH4(+). It functions in the pathway porphyrin-containing compound metabolism; protoporphyrin-IX biosynthesis; coproporphyrinogen-III from 5-aminolevulinate: step 2/4. Functionally, tetrapolymerization of the monopyrrole PBG into the hydroxymethylbilane pre-uroporphyrinogen in several discrete steps. The sequence is that of Porphobilinogen deaminase from Lawsonia intracellularis (strain PHE/MN1-00).